Consider the following 255-residue polypeptide: Small ribosomal subunit protein eS1 (255 aa).

A2 carries the post-translational modification N-acetylalanine; partial.

The protein belongs to the eukaryotic ribosomal protein eS1 family. Component of the small ribosomal subunit. Mature ribosomes consist of a small (40S) and a large (60S) subunit. The 40S subunit contains about 33 different proteins and 1 molecule of RNA (18S). The 60S subunit contains about 49 different proteins and 3 molecules of RNA (25S, 5.8S and 5S).

The protein localises to the cytoplasm. The protein is Small ribosomal subunit protein eS1 of Yarrowia lipolytica (strain CLIB 122 / E 150) (Yeast).